The primary structure comprises 385 residues: Succinate--CoA ligase [ADP-forming] subunit beta (385 aa).

One can recognise an ATP-grasp domain in the interval 9-243 (KEILSAYGIP…YSQLDTLEIN (235 aa)). Residues lysine 45, 52–54 (GRG), glutamate 98, valine 101, and glutamate 106 each bind ATP. Residues asparagine 198 and aspartate 212 each contribute to the Mg(2+) site. Substrate-binding positions include asparagine 263 and 320–322 (GIM).

It belongs to the succinate/malate CoA ligase beta subunit family. In terms of assembly, heterotetramer of two alpha and two beta subunits. The cofactor is Mg(2+).

The catalysed reaction is succinate + ATP + CoA = succinyl-CoA + ADP + phosphate. The enzyme catalyses GTP + succinate + CoA = succinyl-CoA + GDP + phosphate. It functions in the pathway carbohydrate metabolism; tricarboxylic acid cycle; succinate from succinyl-CoA (ligase route): step 1/1. Succinyl-CoA synthetase functions in the citric acid cycle (TCA), coupling the hydrolysis of succinyl-CoA to the synthesis of either ATP or GTP and thus represents the only step of substrate-level phosphorylation in the TCA. The beta subunit provides nucleotide specificity of the enzyme and binds the substrate succinate, while the binding sites for coenzyme A and phosphate are found in the alpha subunit. This is Succinate--CoA ligase [ADP-forming] subunit beta from Geobacter sulfurreducens (strain ATCC 51573 / DSM 12127 / PCA).